Consider the following 569-residue polypeptide: MRWAWLLPLLWAGCLATDGYSLSVTGSVTVQEGLCVFVACQVQYPNSKGPVFGYWFREGANIFSGSPVATNDPQRSVLKEAQGRFYLMGKENSHNCSLDIRDAQKIDTGTYFFRLDGSVKYSFQKSMLSVLVIALTEVPNIQVTSTLVSGNSTKLLCSVPWACEQGTPPIFSWMSSALTSLGHRTTLSSELNLTPRPQDNGTNLTCQVNLPGTGVTVERTQQLSVIYAPQKMTIRVSWGDDTGTKVLQSGASLQIQEGESLSLVCMADSNPPAVLSWERPTQKPFQLSTPAELQLPRAELEDQGKYICQAQNSQGAQTASVSLSIRSLLQLLGPSCSFEGQGLHCSCSSRAWPAPSLRWRLGEGVLEGNSSNGSFTVKSSSAGQWANSSLILSMEFSSNHRLSCEAWSDNRVQRATILLVSGPKVSQAGKSETSRGTVLGAIWGAGLMALLAVCLCLIFFTVKVLRKKSALKVAATKGNHLAKNPASTINSASITSSNIALGYPIQGHLNEPGSQTQKEQPPLATVPDTQKDEPELHYASLSFQGPMPPKPQNTEAMKSVYTEIKIHKC.

Positions 1–16 (MRWAWLLPLLWAGCLA) are cleaved as a signal peptide. The Extracellular segment spans residues 17-439 (TDGYSLSVTG…KSETSRGTVL (423 aa)). The region spanning 18 to 116 (DGYSLSVTGS…DTGTYFFRLD (99 aa)) is the Ig-like V-type domain. 4 disulfides stabilise this stretch: Cys35-Cys163, Cys40-Cys96, Cys157-Cys206, and Cys265-Cys308. Asn95 is a glycosylation site (N-linked (GlcNAc...) asparagine). N-acetylneuraminate is bound by residues Arg114, Lys120, and Ser122. Ig-like C2-type domains follow at residues 139–224 (PNIQ…QQLS) and 229–324 (PQKM…VSLS). 3 N-linked (GlcNAc...) asparagine glycosylation sites follow: Asn151, Asn200, and Asn203. Residues Asn369, Asn372, and Asn387 are each glycosylated (N-linked (GlcNAc...) asparagine). A helical membrane pass occupies residues 440-460 (GAIWGAGLMALLAVCLCLIFF). The Cytoplasmic portion of the chain corresponds to 461-569 (TVKVLRKKSA…VYTEIKIHKC (109 aa)). The tract at residues 508 to 556 (HLNEPGSQTQKEQPPLATVPDTQKDEPELHYASLSFQGPMPPKPQNTEA) is disordered. The ITIM motif motif lies at 536 to 541 (LHYASL). An SLAM-like motif motif is present at residues 559-564 (SVYTEI).

The protein belongs to the immunoglobulin superfamily. SIGLEC (sialic acid binding Ig-like lectin) family. In terms of tissue distribution, predominantly expressed by immature monocytic/myeloid lineage cells in bone marrow. Also found at lower levels in mature neutrophils and monocytes.

The protein resides in the membrane. In terms of biological role, putative adhesion molecule that mediates sialic-acid dependent binding to cells. Preferentially binds to alpha-2,3-linked sialic acid. The sialic acid recognition site may be masked by cis interactions with sialic acids on the same cell surface. The sequence is that of Sialic acid-binding Ig-like lectin 5 (Siglec5) from Mus musculus (Mouse).